The primary structure comprises 308 residues: Acetaldehyde dehydrogenase 1 (308 aa).

10 to 13 is a binding site for NAD(+); that stretch reads SGNI. Cys-128 acts as the Acyl-thioester intermediate in catalysis. NAD(+)-binding positions include 159 to 167 and Asn-285; that span reads SAGPGTRAN.

It belongs to the acetaldehyde dehydrogenase family.

It catalyses the reaction acetaldehyde + NAD(+) + CoA = acetyl-CoA + NADH + H(+). In Salinispora arenicola (strain CNS-205), this protein is Acetaldehyde dehydrogenase 1.